The chain runs to 348 residues: Protein RecA (348 aa).

64–71 (GPESSGKT) is a binding site for ATP. A compositionally biased stretch (basic and acidic residues) spans 326–335 (EIDGTNKEPL). Residues 326–348 (EIDGTNKEPLDENEETLSLLDDE) form a disordered region. Over residues 336 to 348 (DENEETLSLLDDE) the composition is skewed to acidic residues.

Belongs to the RecA family.

Its subcellular location is the cytoplasm. Functionally, can catalyze the hydrolysis of ATP in the presence of single-stranded DNA, the ATP-dependent uptake of single-stranded DNA by duplex DNA, and the ATP-dependent hybridization of homologous single-stranded DNAs. It interacts with LexA causing its activation and leading to its autocatalytic cleavage. The polypeptide is Protein RecA (Listeria innocua serovar 6a (strain ATCC BAA-680 / CLIP 11262)).